The primary structure comprises 59 residues: Potassium channel toxin alpha-KTx 4.5 (59 aa).

Positions 1–22 are cleaved as a signal peptide; the sequence is MKAFYGVLIIFILISMLDLSQQ. Disulfide bonds link C29-C50, C35-C55, and C39-C57. The interaction with Ca(2+)-activated K(+) channels stretch occupies residues 48 to 55; sequence GKCMNGKC.

In terms of tissue distribution, expressed by the venom gland.

The protein localises to the secreted. Its function is as follows. Inhibits with low potency Kv1.1/KCNA1, Kv1.2/KCNA2, Kv1.3/KCNA3 and Kv11.1/KCNH2/ERG1 voltage-gated potassium channels. The polypeptide is Potassium channel toxin alpha-KTx 4.5 (Tityus costatus (Brazilian scorpion)).